The sequence spans 290 residues: Probable proteasome subunit beta type-6 (290 aa).

It belongs to the peptidase T1B family. The 26S proteasome consists of a 20S proteasome core and two 19S regulatory subunits. The 20S proteasome core is composed of 28 subunits that are arranged in four stacked rings, resulting in a barrel-shaped structure. The two end rings are each formed by seven alpha subunits, and the two central rings are each formed by seven beta subunits. The catalytic chamber with the active sites is on the inside of the barrel.

The protein resides in the cytoplasm. Its subcellular location is the nucleus. In terms of biological role, non-catalytic component of the proteasome which degrades poly-ubiquitinated proteins in the cytoplasm and in the nucleus. It is essential for the regulated turnover of proteins and for the removal of misfolded proteins. The proteasome is a multicatalytic proteinase complex that is characterized by its ability to cleave peptides with Arg, Phe, Tyr, Leu, and Glu adjacent to the leaving group at neutral or slightly basic pH. It has an ATP-dependent proteolytic activity. In Encephalitozoon cuniculi (strain GB-M1) (Microsporidian parasite), this protein is Probable proteasome subunit beta type-6 (PRE7).